A 488-amino-acid polypeptide reads, in one-letter code: Germacrene A hydroxylase (488 aa).

Topologically, residues Met-1 to Thr-6 are cytoplasmic. Residues Thr-7 to Thr-23 traverse the membrane as a helical; Signal-anchor for type II membrane protein segment. The Lumenal segment spans residues Arg-24–Phe-488. N-linked (GlcNAc...) asparagine glycans are attached at residues Asn-260 and Asn-379. A heme-binding site is contributed by Cys-432.

This sequence belongs to the cytochrome P450 family. Heme serves as cofactor.

Its subcellular location is the endoplasmic reticulum membrane. The protein localises to the microsome membrane. It carries out the reaction (+)-(R)-germacrene A + 3 reduced [NADPH--hemoprotein reductase] + 3 O2 = germacra-1(10),4,11(13)-trien-12-oate + 3 oxidized [NADPH--hemoprotein reductase] + 4 H2O + 4 H(+). The protein operates within secondary metabolite biosynthesis; terpenoid biosynthesis. With respect to regulation, inhibited by cytochrome C, miconazole, aminobenzotriazole, metyrapone and clotrimazole. In terms of biological role, involved in the biosynthesis of germacrene-derived sesquiterpene lactones. Catalyzes three consecutive oxidations of germacrene A to produce germacrene A acid. Could also catalyze the three-step oxidation of non-natural substrate amorphadiene to artemisinic acid. Can use beta-elemene as substrate. The polypeptide is Germacrene A hydroxylase (Cichorium intybus (Chicory)).